Here is a 227-residue protein sequence, read N- to C-terminus: Cytochrome c oxidase subunit 2 (227 aa).

The Mitochondrial intermembrane portion of the chain corresponds to Met1–Ser14. A helical membrane pass occupies residues Pro15 to Met45. Over Leu46 to Gln59 the chain is Mitochondrial matrix. Residues Glu60–Met87 traverse the membrane as a helical segment. Topologically, residues Asp88–Ala227 are mitochondrial intermembrane. Residues His161, Cys196, Glu198, Cys200, His204, and Met207 each coordinate Cu cation. Residue Glu198 participates in Mg(2+) binding. Residue Tyr218 is modified to Phosphotyrosine.

It belongs to the cytochrome c oxidase subunit 2 family. Component of the cytochrome c oxidase (complex IV, CIV), a multisubunit enzyme composed of 14 subunits. The complex is composed of a catalytic core of 3 subunits MT-CO1, MT-CO2 and MT-CO3, encoded in the mitochondrial DNA, and 11 supernumerary subunits COX4I, COX5A, COX5B, COX6A, COX6B, COX6C, COX7A, COX7B, COX7C, COX8 and NDUFA4, which are encoded in the nuclear genome. The complex exists as a monomer or a dimer and forms supercomplexes (SCs) in the inner mitochondrial membrane with NADH-ubiquinone oxidoreductase (complex I, CI) and ubiquinol-cytochrome c oxidoreductase (cytochrome b-c1 complex, complex III, CIII), resulting in different assemblies (supercomplex SCI(1)III(2)IV(1) and megacomplex MCI(2)III(2)IV(2)). Found in a complex with TMEM177, COA6, COX18, COX20, SCO1 and SCO2. Interacts with TMEM177 in a COX20-dependent manner. Interacts with COX20. Interacts with COX16. It depends on Cu cation as a cofactor.

It localises to the mitochondrion inner membrane. The enzyme catalyses 4 Fe(II)-[cytochrome c] + O2 + 8 H(+)(in) = 4 Fe(III)-[cytochrome c] + 2 H2O + 4 H(+)(out). Component of the cytochrome c oxidase, the last enzyme in the mitochondrial electron transport chain which drives oxidative phosphorylation. The respiratory chain contains 3 multisubunit complexes succinate dehydrogenase (complex II, CII), ubiquinol-cytochrome c oxidoreductase (cytochrome b-c1 complex, complex III, CIII) and cytochrome c oxidase (complex IV, CIV), that cooperate to transfer electrons derived from NADH and succinate to molecular oxygen, creating an electrochemical gradient over the inner membrane that drives transmembrane transport and the ATP synthase. Cytochrome c oxidase is the component of the respiratory chain that catalyzes the reduction of oxygen to water. Electrons originating from reduced cytochrome c in the intermembrane space (IMS) are transferred via the dinuclear copper A center (CU(A)) of subunit 2 and heme A of subunit 1 to the active site in subunit 1, a binuclear center (BNC) formed by heme A3 and copper B (CU(B)). The BNC reduces molecular oxygen to 2 water molecules using 4 electrons from cytochrome c in the IMS and 4 protons from the mitochondrial matrix. The polypeptide is Cytochrome c oxidase subunit 2 (MT-CO2) (Mammuthus primigenius (Siberian woolly mammoth)).